Here is a 403-residue protein sequence, read N- to C-terminus: uncharacterized protein (403 aa).

Residues 55–88 are compositionally biased toward polar residues; the sequence is LTGSPNPQATPKQENKSNFFSEKQSVRENGNSSA. The segment at 55-95 is disordered; the sequence is LTGSPNPQATPKQENKSNFFSEKQSVRENGNSSAGEKKQKW. At serine 58 the chain carries Phosphoserine. The region spanning 113 to 177 is the J domain; that stretch reads QYYEILDLKK…NLRAHYDRTG (65 aa). A helical transmembrane segment spans residues 263-283; that stretch reads SIFYQLLPLIVVILFAFLSNF.

The protein localises to the endoplasmic reticulum membrane. This is an uncharacterized protein from Schizosaccharomyces pombe (strain 972 / ATCC 24843) (Fission yeast).